A 132-amino-acid polypeptide reads, in one-letter code: Small ribosomal subunit protein uS8 (132 aa).

The protein belongs to the universal ribosomal protein uS8 family. As to quaternary structure, part of the 30S ribosomal subunit. Contacts proteins S5 and S12.

Its function is as follows. One of the primary rRNA binding proteins, it binds directly to 16S rRNA central domain where it helps coordinate assembly of the platform of the 30S subunit. The sequence is that of Small ribosomal subunit protein uS8 from Staphylococcus epidermidis (strain ATCC 35984 / DSM 28319 / BCRC 17069 / CCUG 31568 / BM 3577 / RP62A).